A 558-amino-acid chain; its full sequence is SPATS2-like protein (558 aa).

Residue alanine 2 is modified to N-acetylalanine. Residues 63–79 (GKKKNNKRKRSKSKQHQ) show a composition bias toward basic residues. Disordered stretches follow at residues 63–134 (GKKK…EKKI) and 157–201 (KLSL…KSNT). Positions 80 to 92 (GNKDAKDKVERPE) are enriched in basic and acidic residues. Position 120 is a phosphoserine (serine 120). Positions 271–344 (LMAEMDKVKE…ARFSCDIEQL (74 aa)) form a coiled coil. The interval 380 to 525 (TSGKQSNFSR…DTSEARPFRG (146 aa)) is disordered. Polar residues-rich tracts occupy residues 381–390 (SGKQSNFSRK), 410–432 (SLPSTADPSHQTMPANKQNGSSN), and 440–456 (QYHNNRLNGPAKSQGSG). Residue serine 455 is modified to Phosphoserine. Basic residues predominate over residues 469-485 (HEHRRQPHNGFRPKNKG). Basic and acidic residues predominate over residues 513-522 (HAADTSEARP).

This sequence belongs to the SPATS2 family.

Its subcellular location is the cytoplasm. It is found in the nucleus. The protein resides in the nucleolus. This Homo sapiens (Human) protein is SPATS2-like protein (SPATS2L).